The sequence spans 269 residues: Energy-coupling factor transporter transmembrane protein EcfT (269 aa).

Transmembrane regions (helical) follow at residues 28-48, 49-69, 73-93, 109-129, and 246-266; these read MIIYIIIIFWANNVVTNLLLL, AFTLLLIFLSQIKWSFFFNGV, IGIILFTTLFQVFFTQGGSVL, AILIFMRFVLIIFFSTLLTLT, and TLAIILVVILGIFLFCLKSPS.

This sequence belongs to the energy-coupling factor EcfT family. In terms of assembly, forms a stable energy-coupling factor (ECF) transporter complex composed of 2 membrane-embedded substrate-binding proteins (S component), 2 ATP-binding proteins (A component) and 2 transmembrane proteins (T component). May be able to interact with more than 1 S component at a time.

The protein resides in the cell membrane. Functionally, transmembrane (T) component of an energy-coupling factor (ECF) ABC-transporter complex. Unlike classic ABC transporters this ECF transporter provides the energy necessary to transport a number of different substrates. This chain is Energy-coupling factor transporter transmembrane protein EcfT, found in Streptococcus equi subsp. equi (strain 4047).